We begin with the raw amino-acid sequence, 309 residues long: Biotin synthase (309 aa).

One can recognise a Radical SAM core domain in the interval 35–259; that stretch reads NKIQISSLLS…MIPKSYIRLS (225 aa). 3 residues coordinate [4Fe-4S] cluster: cysteine 50, cysteine 54, and cysteine 57. Positions 94, 125, 185, and 257 each coordinate [2Fe-2S] cluster.

The protein belongs to the radical SAM superfamily. Biotin synthase family. In terms of assembly, homodimer. The cofactor is [4Fe-4S] cluster. Requires [2Fe-2S] cluster as cofactor.

It catalyses the reaction (4R,5S)-dethiobiotin + (sulfur carrier)-SH + 2 reduced [2Fe-2S]-[ferredoxin] + 2 S-adenosyl-L-methionine = (sulfur carrier)-H + biotin + 2 5'-deoxyadenosine + 2 L-methionine + 2 oxidized [2Fe-2S]-[ferredoxin]. It participates in cofactor biosynthesis; biotin biosynthesis; biotin from 7,8-diaminononanoate: step 2/2. Its function is as follows. Catalyzes the conversion of dethiobiotin (DTB) to biotin by the insertion of a sulfur atom into dethiobiotin via a radical-based mechanism. The sequence is that of Biotin synthase from Rickettsia felis (strain ATCC VR-1525 / URRWXCal2) (Rickettsia azadi).